Here is a 484-residue protein sequence, read N- to C-terminus: Serine/threonine-protein kinase RIO1 (484 aa).

A Protein kinase domain is found at A76–S402. Positions 125 and 198 each coordinate ATP. The active-site Proton acceptor is the D244. Positions 249 and 261 each coordinate Mg(2+). The active-site 4-aspartylphosphate intermediate is the D261. Residues D398–K484 are disordered. Phosphoserine; by CK2 is present on residues S402, S403, S409, S416, S417, and S419. An interaction with CKA2 region spans residues S403–K484. Residues E407–E434 are compositionally biased toward acidic residues. Residues G440–K484 are association with (pre-)40S ribosomal subunit. Residues K442 to R461 are compositionally biased toward basic and acidic residues. The segment covering E462–K484 has biased composition (basic residues).

This sequence belongs to the protein kinase superfamily. RIO-type Ser/Thr kinase family. As to quaternary structure, interacts with CKA2. Mg(2+) serves as cofactor. Autophosphorylated. Phosphorylated by casein kinase II (CK2). Phosphorylation by CK2 stimulates RIO1 kinase activity and targets it for degradation at the G1/S transition of the cell cycle.

The protein localises to the cytoplasm. It carries out the reaction L-seryl-[protein] + ATP = O-phospho-L-seryl-[protein] + ADP + H(+). It catalyses the reaction L-threonyl-[protein] + ATP = O-phospho-L-threonyl-[protein] + ADP + H(+). The enzyme catalyses ATP + H2O = ADP + phosphate + H(+). In terms of biological role, required for the final endonucleolytic cleavage at site D converting 20S pre-rRNA into the mature 18S rRNA. Required for the final steps of cytoplasmic maturation of the 40S ribosomal subunit. The association with the very late 40S subunit intermediate seems to follow RIO2 association with precursors of the 40S subunit and may involve a translation-like checkpoint point cycle preceeding the binding to the 60S ribosomal subunit. Despite the protein kinase domain is proposed to act predominantly as an ATPase. The catalytic activity regulates its dynamic association with the 40S subunit. Has a role in the cell cycle where it is required for entrance into S-phase and in the control of the onset of anaphase. Appears to also be involved in the maintenance of chromosome stability and correct mitotic segregation. The protein is Serine/threonine-protein kinase RIO1 (RIO1) of Saccharomyces cerevisiae (strain ATCC 204508 / S288c) (Baker's yeast).